The primary structure comprises 446 residues: ATP-dependent protease ATPase subunit HslU (446 aa).

Residues valine 18, 60–65 (GVGKTE), aspartate 259, glutamate 324, and arginine 396 contribute to the ATP site.

Belongs to the ClpX chaperone family. HslU subfamily. In terms of assembly, a double ring-shaped homohexamer of HslV is capped on each side by a ring-shaped HslU homohexamer. The assembly of the HslU/HslV complex is dependent on binding of ATP.

The protein resides in the cytoplasm. In terms of biological role, ATPase subunit of a proteasome-like degradation complex; this subunit has chaperone activity. The binding of ATP and its subsequent hydrolysis by HslU are essential for unfolding of protein substrates subsequently hydrolyzed by HslV. HslU recognizes the N-terminal part of its protein substrates and unfolds these before they are guided to HslV for hydrolysis. The polypeptide is ATP-dependent protease ATPase subunit HslU (Acidovorax ebreus (strain TPSY) (Diaphorobacter sp. (strain TPSY))).